The chain runs to 336 residues: Glycerol-3-phosphate dehydrogenase [NAD(P)+] (336 aa).

Residues W16 and K109 each contribute to the NADPH site. Residues K109, G137, and S139 each contribute to the sn-glycerol 3-phosphate site. A141 is an NADPH binding site. Sn-glycerol 3-phosphate is bound by residues K192, D245, S255, R256, and N257. The Proton acceptor role is filled by K192. R256 provides a ligand contact to NADPH. V280 and E282 together coordinate NADPH.

It belongs to the NAD-dependent glycerol-3-phosphate dehydrogenase family.

It is found in the cytoplasm. The enzyme catalyses sn-glycerol 3-phosphate + NAD(+) = dihydroxyacetone phosphate + NADH + H(+). The catalysed reaction is sn-glycerol 3-phosphate + NADP(+) = dihydroxyacetone phosphate + NADPH + H(+). It participates in membrane lipid metabolism; glycerophospholipid metabolism. Its function is as follows. Catalyzes the reduction of the glycolytic intermediate dihydroxyacetone phosphate (DHAP) to sn-glycerol 3-phosphate (G3P), the key precursor for phospholipid synthesis. This chain is Glycerol-3-phosphate dehydrogenase [NAD(P)+], found in Hyphomonas neptunium (strain ATCC 15444).